We begin with the raw amino-acid sequence, 227 residues long: Cytochrome c oxidase subunit 2 (227 aa).

Residues 1–14 are Mitochondrial intermembrane-facing; the sequence is MAYPFQLGLQDATS. Residues 15–45 form a helical membrane-spanning segment; the sequence is PIMEELLHFHDHTLMIVFLISSLVLYIISLM. At 46–59 the chain is on the mitochondrial matrix side; that stretch reads LTTKLTHTSTMDAQ. Residues 60-87 form a helical membrane-spanning segment; that stretch reads EVETVWTILPAIILILIALPSLRILYMM. At 88 to 227 the chain is on the mitochondrial intermembrane side; it reads DEINNPSLTV…YFETWSALMV (140 aa). His161, Cys196, Glu198, Cys200, His204, and Met207 together coordinate Cu cation. Mg(2+) is bound at residue Glu198. Tyr218 bears the Phosphotyrosine mark.

This sequence belongs to the cytochrome c oxidase subunit 2 family. As to quaternary structure, component of the cytochrome c oxidase (complex IV, CIV), a multisubunit enzyme composed of 14 subunits. The complex is composed of a catalytic core of 3 subunits MT-CO1, MT-CO2 and MT-CO3, encoded in the mitochondrial DNA, and 11 supernumerary subunits COX4I, COX5A, COX5B, COX6A, COX6B, COX6C, COX7A, COX7B, COX7C, COX8 and NDUFA4, which are encoded in the nuclear genome. The complex exists as a monomer or a dimer and forms supercomplexes (SCs) in the inner mitochondrial membrane with NADH-ubiquinone oxidoreductase (complex I, CI) and ubiquinol-cytochrome c oxidoreductase (cytochrome b-c1 complex, complex III, CIII), resulting in different assemblies (supercomplex SCI(1)III(2)IV(1) and megacomplex MCI(2)III(2)IV(2)). Found in a complex with TMEM177, COA6, COX18, COX20, SCO1 and SCO2. Interacts with TMEM177 in a COX20-dependent manner. Interacts with COX20. Interacts with COX16. Cu cation is required as a cofactor.

It is found in the mitochondrion inner membrane. It carries out the reaction 4 Fe(II)-[cytochrome c] + O2 + 8 H(+)(in) = 4 Fe(III)-[cytochrome c] + 2 H2O + 4 H(+)(out). In terms of biological role, component of the cytochrome c oxidase, the last enzyme in the mitochondrial electron transport chain which drives oxidative phosphorylation. The respiratory chain contains 3 multisubunit complexes succinate dehydrogenase (complex II, CII), ubiquinol-cytochrome c oxidoreductase (cytochrome b-c1 complex, complex III, CIII) and cytochrome c oxidase (complex IV, CIV), that cooperate to transfer electrons derived from NADH and succinate to molecular oxygen, creating an electrochemical gradient over the inner membrane that drives transmembrane transport and the ATP synthase. Cytochrome c oxidase is the component of the respiratory chain that catalyzes the reduction of oxygen to water. Electrons originating from reduced cytochrome c in the intermembrane space (IMS) are transferred via the dinuclear copper A center (CU(A)) of subunit 2 and heme A of subunit 1 to the active site in subunit 1, a binuclear center (BNC) formed by heme A3 and copper B (CU(B)). The BNC reduces molecular oxygen to 2 water molecules using 4 electrons from cytochrome c in the IMS and 4 protons from the mitochondrial matrix. The sequence is that of Cytochrome c oxidase subunit 2 (MT-CO2) from Canis mesomelas elongae (Eastern African black-backed jackal).